Reading from the N-terminus, the 1107-residue chain is Unconventional myosin-Ib (1107 aa).

Residues 15-701 (IGVGDMVLLE…TLFQLEDLRK (687 aa)) enclose the Myosin motor domain. Serine 60 carries the post-translational modification Phosphoserine. 108–115 (GESGAGKT) is a binding site for ATP. Residue lysine 287 forms a Glycyl lysine isopeptide (Lys-Gly) (interchain with G-Cter in SUMO1); alternate linkage. A Glycyl lysine isopeptide (Lys-Gly) (interchain with G-Cter in SUMO2); alternate cross-link involves residue lysine 287. The segment at 592-599 (YIRCIKPN) is actin-binding. 5 consecutive IQ domains span residues 704–727 (LEDLATLIQKIYRGWKCRTHFLLM), 728–749 (KRSQVVIAAWYRRYAQQKRYQQ), 750–778 (IKSSALVIQSYIRGWKARKILRELKHQKR), 780–807 (KEAATTIAAYWHGTQARRELKRLKEEAR), and 808–837 (RKHAVAVIWAYWLGLKVRREYRKFFRANAG). The 185-residue stretch at 923 to 1107 (KALYPSSVGQ…NNRLLEVAVP (185 aa)) folds into the TH1 domain.

This sequence belongs to the TRAFAC class myosin-kinesin ATPase superfamily. Myosin family. Prominent expression is seen in the brain, lung and liver. It is also expressed in the heart and testis. A high level expression is seen in virtually all neurons (but not glia) in the postnatal and adult mouse brain and in neuroblasts of the cerebellar external granular layer.

Motor protein that may participate in process critical to neuronal development and function such as cell migration, neurite outgrowth and vesicular transport. In Mus musculus (Mouse), this protein is Unconventional myosin-Ib (Myo1b).